Here is a 113-residue protein sequence, read N- to C-terminus: C-C motif chemokine 15 (113 aa).

Residues 1–21 form the signal peptide; that stretch reads MKVSVAALSCLMLVAVLGSQA. Intrachain disulfides connect cysteine 53/cysteine 77, cysteine 54/cysteine 93, and cysteine 64/cysteine 104.

It belongs to the intercrine beta (chemokine CC) family. In terms of assembly, monomer. Post-translationally, the N-terminal is proteolytically cleaved by proteases associated with inflammatory responses. The processed forms CCL15(22-92), CCL15(25-92) and CCL15(29-92) exhibit increase in CCR1-mediated signaling and chemotaxis assays in vitro. In terms of tissue distribution, most abundant in heart, skeletal muscle and adrenal gland. Lower levels in placenta, liver, pancreas and bone marrow. CCL15(22-92), CCL15(25-92) and CCL15(29-92) are found in high levels in synovial fluids from rheumatoid patients.

The protein localises to the secreted. Its function is as follows. Chemotactic factor that attracts T-cells and monocytes, but not neutrophils, eosinophils, or B-cells. Acts mainly via CC chemokine receptor CCR1. Also binds to CCR3. CCL15(22-92), CCL15(25-92) and CCL15(29-92) are more potent chemoattractants than the CCL15. This is C-C motif chemokine 15 (CCL15) from Homo sapiens (Human).